Reading from the N-terminus, the 63-residue chain is Metallothionein-like protein type 3 (63 aa).

This sequence belongs to the metallothionein superfamily. Type 15 family.

In terms of biological role, metallothioneins have a high content of cysteine residues that bind various heavy metals. In Actinidia deliciosa (Kiwi), this protein is Metallothionein-like protein type 3.